Consider the following 587-residue polypeptide: Arginine--tRNA ligase (587 aa).

Positions 127-137 match the 'HIGH' region motif; the sequence is PNLAKEMHVGH.

The protein belongs to the class-I aminoacyl-tRNA synthetase family. As to quaternary structure, monomer.

Its subcellular location is the cytoplasm. The enzyme catalyses tRNA(Arg) + L-arginine + ATP = L-arginyl-tRNA(Arg) + AMP + diphosphate. The protein is Arginine--tRNA ligase of Pseudomonas aeruginosa (strain ATCC 15692 / DSM 22644 / CIP 104116 / JCM 14847 / LMG 12228 / 1C / PRS 101 / PAO1).